The chain runs to 458 residues: Argininosuccinate lyase (458 aa).

Belongs to the lyase 1 family. Argininosuccinate lyase subfamily.

It localises to the cytoplasm. It catalyses the reaction 2-(N(omega)-L-arginino)succinate = fumarate + L-arginine. Its pathway is amino-acid biosynthesis; L-arginine biosynthesis; L-arginine from L-ornithine and carbamoyl phosphate: step 3/3. The chain is Argininosuccinate lyase from Trichlorobacter lovleyi (strain ATCC BAA-1151 / DSM 17278 / SZ) (Geobacter lovleyi).